A 390-amino-acid polypeptide reads, in one-letter code: Precorrin-6Y C(5,15)-methyltransferase [decarboxylating] (390 aa).

It belongs to the precorrin methyltransferase family.

It carries out the reaction precorrin-6B + 2 S-adenosyl-L-methionine = precorrin-8X + 2 S-adenosyl-L-homocysteine + CO2 + 3 H(+). It participates in cofactor biosynthesis; adenosylcobalamin biosynthesis; cob(II)yrinate a,c-diamide from precorrin-2 (aerobic route): step 7/10. Catalyzes the methylation of both C-5 and C-15 in precorrin-6Y to form precorrin-8X. The protein is Precorrin-6Y C(5,15)-methyltransferase [decarboxylating] (cobL) of Mycobacterium tuberculosis (strain CDC 1551 / Oshkosh).